The following is a 324-amino-acid chain: HTH-type transcriptional regulator CysB (324 aa).

The HTH lysR-type domain occupies 1-59 (MKLQQLRYIVEVVNHNLNVSSTAEGLYTSQPGISKQVRMLEDELGIQIFARSGKHLTQV). The H-T-H motif DNA-binding region spans 19–38 (VSSTAEGLYTSQPGISKQVR).

It belongs to the LysR transcriptional regulatory family. Homotetramer.

It localises to the cytoplasm. In terms of biological role, this protein is a positive regulator of gene expression for the cysteine regulon, a system of 10 or more loci involved in the biosynthesis of L-cysteine from inorganic sulfate. The inducer for CysB is N-acetylserine. CysB inhibits its own transcription. The polypeptide is HTH-type transcriptional regulator CysB (cysB) (Salmonella typhimurium (strain LT2 / SGSC1412 / ATCC 700720)).